A 379-amino-acid polypeptide reads, in one-letter code: DnaJ homolog subfamily B member 14 (379 aa).

Topologically, residues 1–244 are cytoplasmic; that stretch reads MEGNRDEAEK…GHEREEERGD (244 aa). Positions 55–94 are disordered; that stretch reads STAGNSPHCRKPSGSGDQSKPNCTKDSTSGSGEGGKGYTK. Positions 69-84 are enriched in polar residues; it reads SGDQSKPNCTKDSTSG. The region spanning 108–172 is the J domain; it reads NYYEVLGVTK…EKRKQYDLTG (65 aa). The tract at residues 219–241 is disordered; that stretch reads SNGRAGYSQQHQHRHSGHEREEE. A helical membrane pass occupies residues 245 to 265; sequence GGFSVFIQLMPIIVLILVSLL. Over 266 to 379 the chain is Lumenal; that stretch reads SQLMVSNPPY…ERLTSLYKGG (114 aa).

Belongs to the DnaJ family. DNAJB12/DNAJB14 subfamily. In terms of assembly, interacts (via J domain) with HSPA8/Hsc70. Forms a multiprotein complex, at least composed of DNAJB12, DNAJB14, HSPA8/Hsc70 and SGTA; interaction with DNAJB14 and HSPA8/Hsc70 is direct.

The protein resides in the endoplasmic reticulum membrane. The protein localises to the nucleus membrane. In terms of biological role, acts as a co-chaperone with HSPA8/Hsc70; required to promote protein folding and trafficking, prevent aggregation of client proteins, and promote unfolded proteins to endoplasmic reticulum-associated degradation (ERAD) pathway. Acts by determining HSPA8/Hsc70's ATPase and polypeptide-binding activities. Can also act independently of HSPA8/Hsc70: together with DNAJB12, acts as a chaperone that promotes maturation of potassium channels KCND2 and KCNH2 by stabilizing nascent channel subunits and assembling them into tetramers. While stabilization of nascent channel proteins is dependent on HSPA8/Hsc70, the process of oligomerization of channel subunits is independent of HSPA8/Hsc70. When overexpressed, forms membranous structures together with DNAJB12 and HSPA8/Hsc70 within the nucleus; the role of these structures, named DJANGOs, is still unclear. Functionally, (Microbial infection) In case of infection by polyomavirus, involved in the virus endoplasmic reticulum membrane penetration and infection. This Homo sapiens (Human) protein is DnaJ homolog subfamily B member 14.